Consider the following 142-residue polypeptide: Nucleoside diphosphate kinase (142 aa).

Residues K11, F59, R87, T93, R104, and N114 each coordinate ATP. The active-site Pros-phosphohistidine intermediate is the H117.

The protein belongs to the NDK family. Homotetramer. Mg(2+) is required as a cofactor.

The protein localises to the cytoplasm. It carries out the reaction a 2'-deoxyribonucleoside 5'-diphosphate + ATP = a 2'-deoxyribonucleoside 5'-triphosphate + ADP. The enzyme catalyses a ribonucleoside 5'-diphosphate + ATP = a ribonucleoside 5'-triphosphate + ADP. In terms of biological role, major role in the synthesis of nucleoside triphosphates other than ATP. The ATP gamma phosphate is transferred to the NDP beta phosphate via a ping-pong mechanism, using a phosphorylated active-site intermediate. This chain is Nucleoside diphosphate kinase, found in Dechloromonas aromatica (strain RCB).